Reading from the N-terminus, the 507-residue chain is Maturase K (507 aa).

This sequence belongs to the intron maturase 2 family. MatK subfamily.

It is found in the plastid. The protein resides in the chloroplast. Its function is as follows. Usually encoded in the trnK tRNA gene intron. Probably assists in splicing its own and other chloroplast group II introns. The sequence is that of Maturase K from Ranunculus macranthus (Large buttercup).